Consider the following 455-residue polypeptide: Zinc finger SWIM domain-containing protein 1 (455 aa).

The tract at residues 264–288 is disordered; it reads ASLSLAETPQDSHTPSEASAENPNT. The segment at 333 to 375 adopts an SWIM-type zinc-finger fold; the sequence is MSIQILEDTHTVQPQPPASCSCYFNQAFHLPCRHILAMLSARQ.

The chain is Zinc finger SWIM domain-containing protein 1 (Zswim1) from Mus musculus (Mouse).